Reading from the N-terminus, the 508-residue chain is Methionine--tRNA ligase (508 aa).

Residues 12 to 22 carry the 'HIGH' region motif; it reads YYVNDIPHIGH. A 'KMSKS' region motif is present at residues 295-299; it reads KISKS. Lysine 298 contributes to the ATP binding site.

This sequence belongs to the class-I aminoacyl-tRNA synthetase family. MetG type 2B subfamily. In terms of assembly, monomer.

The protein resides in the cytoplasm. The catalysed reaction is tRNA(Met) + L-methionine + ATP = L-methionyl-tRNA(Met) + AMP + diphosphate. Its function is as follows. Is required not only for elongation of protein synthesis but also for the initiation of all mRNA translation through initiator tRNA(fMet) aminoacylation. The chain is Methionine--tRNA ligase from Rickettsia conorii (strain ATCC VR-613 / Malish 7).